Here is a 216-residue protein sequence, read N- to C-terminus: ATP-dependent dethiobiotin synthetase BioD (216 aa).

13 to 18 (EVGKTY) serves as a coordination point for ATP. Residue T17 participates in Mg(2+) binding. K38 is an active-site residue. T42 contacts substrate. Residues D47 and 112–115 (EGVG) contribute to the ATP site. Residues D47 and E112 each coordinate Mg(2+).

This sequence belongs to the dethiobiotin synthetase family. Homodimer. The cofactor is Mg(2+).

It localises to the cytoplasm. The catalysed reaction is (7R,8S)-7,8-diammoniononanoate + CO2 + ATP = (4R,5S)-dethiobiotin + ADP + phosphate + 3 H(+). It participates in cofactor biosynthesis; biotin biosynthesis; biotin from 7,8-diaminononanoate: step 1/2. In terms of biological role, catalyzes a mechanistically unusual reaction, the ATP-dependent insertion of CO2 between the N7 and N8 nitrogen atoms of 7,8-diaminopelargonic acid (DAPA, also called 7,8-diammoniononanoate) to form a ureido ring. The polypeptide is ATP-dependent dethiobiotin synthetase BioD (Endomicrobium trichonymphae).